The following is a 359-amino-acid chain: Methylthioribose-1-phosphate isomerase (359 aa).

The active-site Proton donor is the Asp-235.

Belongs to the eIF-2B alpha/beta/delta subunits family. MtnA subfamily.

Its subcellular location is the cytoplasm. The protein resides in the nucleus. The catalysed reaction is 5-(methylsulfanyl)-alpha-D-ribose 1-phosphate = 5-(methylsulfanyl)-D-ribulose 1-phosphate. It functions in the pathway amino-acid biosynthesis; L-methionine biosynthesis via salvage pathway; L-methionine from S-methyl-5-thio-alpha-D-ribose 1-phosphate: step 1/6. In terms of biological role, catalyzes the interconversion of methylthioribose-1-phosphate (MTR-1-P) into methylthioribulose-1-phosphate (MTRu-1-P). This Schizosaccharomyces pombe (strain 972 / ATCC 24843) (Fission yeast) protein is Methylthioribose-1-phosphate isomerase (mri1).